The sequence spans 131 residues: Histone H2B (131 aa).

A compositionally biased stretch (basic and acidic residues) spans 1-19 (MAPKAEKKPASKAPAEKKP). The disordered stretch occupies residues 1–38 (MAPKAEKKPASKAPAEKKPAAKKTASSTDGGKKRTKAR). Lys-7 and Lys-8 each carry N6-acetyllysine; alternate. Glycyl lysine isopeptide (Lys-Gly) (interchain with G-Cter in SUMO); alternate cross-links involve residues Lys-7 and Lys-8. Residue Ser-11 is modified to Phosphoserine. The residue at position 12 (Lys-12) is an N6-acetyllysine. Lys-17 carries the N6-acetyllysine; alternate modification. Lys-17 is covalently cross-linked (Glycyl lysine isopeptide (Lys-Gly) (interchain with G-Cter in SUMO); alternate). Lys-18 participates in a covalent cross-link: Glycyl lysine isopeptide (Lys-Gly) (interchain with G-Cter in SUMO). Residue Lys-125 forms a Glycyl lysine isopeptide (Lys-Gly) (interchain with G-Cter in ubiquitin) linkage.

It belongs to the histone H2B family. In terms of assembly, the nucleosome is a histone octamer containing two molecules each of H2A, H2B, H3 and H4 assembled in one H3-H4 heterotetramer and two H2A-H2B heterodimers. The octamer wraps approximately 147 bp of DNA. In terms of processing, monoubiquitinated by the UBC2-BRE1 complex to form H2BK123ub1. H2BK123ub1 gives a specific tag for epigenetic transcriptional activation and is also prerequisite for H3K4me and H3K79me formation. H2BK123ub1 also modulates the formation of double-strand breaks during meiosis and is a prerequisite for DNA-damage checkpoint activation. Post-translationally, phosphorylated by STE20 to form H2BS10ph during progression through meiotic prophase. May be correlated with chromosome condensation. Acetylated by GCN5 to form H2BK11ac and H2BK16ac. H2BK16ac can also be formed by ESA1. Acetylation of N-terminal lysines and particularly formation of H2BK11acK16ac has a positive effect on transcription. In terms of processing, sumoylation to form H2BK6su or H2BK7su, and probably also H2BK16su or H2BK17su, occurs preferentially near the telomeres and represses gene transcription.

The protein localises to the nucleus. It localises to the chromosome. Functionally, core component of nucleosome. Nucleosomes wrap and compact DNA into chromatin, limiting DNA accessibility to the cellular machineries which require DNA as a template. Histones thereby play a central role in transcription regulation, DNA repair, DNA replication and chromosomal stability. DNA accessibility is regulated via a complex set of post-translational modifications of histones, also called histone code, and nucleosome remodeling. The chain is Histone H2B (HTB1) from Lodderomyces elongisporus (strain ATCC 11503 / CBS 2605 / JCM 1781 / NBRC 1676 / NRRL YB-4239) (Yeast).